The primary structure comprises 346 residues: Low specificity L-threonine aldolase (346 aa).

K207 carries the post-translational modification N6-(pyridoxal phosphate)lysine.

Belongs to the threonine aldolase family. In terms of assembly, homotetramer. Pyridoxal 5'-phosphate is required as a cofactor.

The catalysed reaction is L-threonine = acetaldehyde + glycine. It catalyses the reaction L-allo-threonine = acetaldehyde + glycine. Catalyzes the cleavage of L-allo-threonine and L-threonine to glycine and acetaldehyde. The polypeptide is Low specificity L-threonine aldolase (ltaE) (Pseudomonas aeruginosa (strain ATCC 15692 / DSM 22644 / CIP 104116 / JCM 14847 / LMG 12228 / 1C / PRS 101 / PAO1)).